Consider the following 366-residue polypeptide: Cell division protein FtsY homolog, chloroplastic (366 aa).

The N-terminal 40 residues, 1–40 (MATSSAHLSFLAGRISPFSSERIGLFPLRGEFRPRMTRFR), are a transit peptide targeting the chloroplast. Residues 171–178 (GVNGGGKT), 254–258 (DTSGR), and 318–321 (TKLD) contribute to the GTP site.

This sequence belongs to the GTP-binding SRP family. As to quaternary structure, monomer. Interacts with FFC/cpSRP54, a component of the cpSRP complex, composed of a FFC/cpSRP54 monomer and a CAO/cpSRP43 dimer. The complex with FFC/cpSRP54 is formed when both proteins are bound with GTP. In terms of tissue distribution, expressed in green tissues. Low levels in roots and seeds.

Its subcellular location is the plastid. The protein localises to the chloroplast stroma. The protein resides in the chloroplast thylakoid membrane. Its function is as follows. Signal recognition particle receptor protein. Binds GTP specifically. The GTPase activity is inhibited by the N-terminus of the protein until binding to the thylakoid membrane. Activates the GTPase activity of FFC/cpSRP54 when bound to the cpSRP complex. Required for light-harvesting chlorophyll a/b-binding protein (LHCP) integration into thylakoids. Might be also functionally linked to the Sec translocation machinery. The sequence is that of Cell division protein FtsY homolog, chloroplastic (CPFTSY) from Arabidopsis thaliana (Mouse-ear cress).